A 141-amino-acid polypeptide reads, in one-letter code: Hydroperoxide reductase (141 aa).

The protein belongs to the OsmC/Ohr family. Homodimer.

It is found in the cytoplasm. Functionally, reduces organic and inorganic peroxide substrates. Protects the cell against oxidative stress. The polypeptide is Hydroperoxide reductase (Mycoplasma genitalium (strain ATCC 33530 / DSM 19775 / NCTC 10195 / G37) (Mycoplasmoides genitalium)).